The following is a 171-amino-acid chain: uncharacterized protein (171 aa).

Functionally, required for production of the bacteriocin SkfA. This is an uncharacterized protein from Bacillus subtilis (strain 168).